Reading from the N-terminus, the 580-residue chain is Phosphatase and actin regulator 1 (580 aa).

2 positions are modified to phosphoserine: serine 67 and serine 78. Threonine 104 is subject to Phosphothreonine. Residues 108 to 129 carry the Nuclear localization signal motif; the sequence is RRRSKFANLGRIFKPWKWRKKK. An RPEL 1 repeat occupies 138–163; it reads AALERKISMRQSREELIKRGVLKEIY. Disordered regions lie at residues 330-350 and 374-408; these read SEQR…SSDG and DNKE…DDAS. Low complexity predominate over residues 337 to 348; sequence STSYHSSGLHSS. The segment covering 374–383 has biased composition (basic and acidic residues); the sequence is DNKENVPHEP. Residues 395 to 407 are compositionally biased toward acidic residues; it reads EEEEEEEDEDDDA. RPEL repeat units lie at residues 422 to 447, 460 to 485, and 498 to 523; these read DSLA…PRQT, TKLT…KPRN, and RRLT…IRFS. The segment at 463 to 494 is disordered; the sequence is TRRLSQRPTAEELEQRNILKPRNEQEEQEEKR. Residue serine 467 is modified to Phosphoserine. A compositionally biased stretch (basic and acidic residues) spans 471–494; it reads TAEELEQRNILKPRNEQEEQEEKR. Residue serine 505 is modified to Phosphoserine.

Belongs to the phosphatase and actin regulator family. As to quaternary structure, interacts (via RPEL repeats) with ACTA1 and PPP1CA; ACTA1 and PPP1CA compete for the same binding site.

Its subcellular location is the cytoplasm. The protein resides in the synapse. The protein localises to the nucleus. Its function is as follows. Binds actin monomers (G actin) and plays a role in multiple processes including the regulation of actin cytoskeleton dynamics, actin stress fibers formation, cell motility and survival, formation of tubules by endothelial cells, and regulation of PPP1CA activity. Involved in the regulation of cortical neuron migration and dendrite arborization. This is Phosphatase and actin regulator 1 (Phactr1) from Mus musculus (Mouse).